We begin with the raw amino-acid sequence, 431 residues long: Enolase (431 aa).

(2R)-2-phosphoglycerate is bound at residue Gln-166. The active-site Proton donor is the Glu-208. The Mg(2+) site is built by Asp-245, Glu-288, and Asp-315. (2R)-2-phosphoglycerate is bound by residues Lys-340, Arg-369, Ser-370, and Lys-391. Lys-340 acts as the Proton acceptor in catalysis.

It belongs to the enolase family. The cofactor is Mg(2+).

The protein resides in the cytoplasm. The protein localises to the secreted. Its subcellular location is the cell surface. The enzyme catalyses (2R)-2-phosphoglycerate = phosphoenolpyruvate + H2O. It participates in carbohydrate degradation; glycolysis; pyruvate from D-glyceraldehyde 3-phosphate: step 4/5. Catalyzes the reversible conversion of 2-phosphoglycerate (2-PG) into phosphoenolpyruvate (PEP). It is essential for the degradation of carbohydrates via glycolysis. The protein is Enolase of Clostridium botulinum (strain Okra / Type B1).